The sequence spans 169 residues: Ribosome maturation factor RimM (169 aa).

In terms of domain architecture, PRC barrel spans 97-169 (PGEYYWYQLI…VITVDWDMNF (73 aa)).

It belongs to the RimM family. In terms of assembly, binds ribosomal protein uS19.

It is found in the cytoplasm. An accessory protein needed during the final step in the assembly of 30S ribosomal subunit, possibly for assembly of the head region. Essential for efficient processing of 16S rRNA. May be needed both before and after RbfA during the maturation of 16S rRNA. It has affinity for free ribosomal 30S subunits but not for 70S ribosomes. The chain is Ribosome maturation factor RimM from Legionella pneumophila subsp. pneumophila (strain Philadelphia 1 / ATCC 33152 / DSM 7513).